The sequence spans 82 residues: ATP synthase subunit c, chloroplastic (82 aa).

2 helical membrane passes run 3-23 (PLIA…ASIG) and 57-77 (LAFM…LLFA).

It belongs to the ATPase C chain family. F-type ATPases have 2 components, F(1) - the catalytic core - and F(0) - the membrane proton channel. F(1) has five subunits: alpha(3), beta(3), gamma(1), delta(1), epsilon(1). F(0) has four main subunits: a(1), b(1), b'(1) and c(10-14). The alpha and beta chains form an alternating ring which encloses part of the gamma chain. F(1) is attached to F(0) by a central stalk formed by the gamma and epsilon chains, while a peripheral stalk is formed by the delta, b and b' chains.

The protein resides in the plastid. It localises to the chloroplast thylakoid membrane. Its function is as follows. F(1)F(0) ATP synthase produces ATP from ADP in the presence of a proton or sodium gradient. F-type ATPases consist of two structural domains, F(1) containing the extramembraneous catalytic core and F(0) containing the membrane proton channel, linked together by a central stalk and a peripheral stalk. During catalysis, ATP synthesis in the catalytic domain of F(1) is coupled via a rotary mechanism of the central stalk subunits to proton translocation. In terms of biological role, key component of the F(0) channel; it plays a direct role in translocation across the membrane. A homomeric c-ring of between 10-14 subunits forms the central stalk rotor element with the F(1) delta and epsilon subunits. The polypeptide is ATP synthase subunit c, chloroplastic (Nephroselmis olivacea (Green alga)).